The following is a 99-amino-acid chain: Large ribosomal subunit protein bL28 (99 aa).

It belongs to the bacterial ribosomal protein bL28 family.

The sequence is that of Large ribosomal subunit protein bL28 from Brucella anthropi (strain ATCC 49188 / DSM 6882 / CCUG 24695 / JCM 21032 / LMG 3331 / NBRC 15819 / NCTC 12168 / Alc 37) (Ochrobactrum anthropi).